The following is a 205-amino-acid chain: Microtubule-associated protein Jupiter (205 aa).

At serine 30 the chain carries Phosphoserine. Phosphothreonine is present on residues threonine 41, threonine 98, and threonine 102. Residues 124–135 (LISNSKGNYNGK) show a composition bias toward polar residues. Positions 124 to 205 (LISNSKGNYN…PPGGYSSGLW (82 aa)) are disordered. Low complexity predominate over residues 136–149 (SGSVSSASSSVSSS). 2 positions are modified to phosphoserine: serine 138 and serine 149. Residues 181–191 (PANNGSSQVIN) are compositionally biased toward polar residues.

The protein belongs to the MAP Jupiter family.

The protein localises to the nucleus. The protein resides in the cytoplasm. It localises to the cytoskeleton. Its subcellular location is the spindle. Functionally, binds to all microtubule populations. This chain is Microtubule-associated protein Jupiter, found in Drosophila virilis (Fruit fly).